A 943-amino-acid polypeptide reads, in one-letter code: Protein translocase subunit SecA (943 aa).

ATP-binding positions include glutamine 90, 108–112, and aspartate 509; that span reads GEGKT. Residues 537-556 form a disordered region; it reads NEHKPPIPKQRSSKSKGGFS.

It belongs to the SecA family. In terms of assembly, monomer and homodimer. Part of the essential Sec protein translocation apparatus which comprises SecA, SecYEG and auxiliary proteins SecDF. Other proteins may also be involved.

It localises to the cell inner membrane. The protein resides in the cellular thylakoid membrane. Its subcellular location is the cytoplasm. It catalyses the reaction ATP + H2O + cellular proteinSide 1 = ADP + phosphate + cellular proteinSide 2.. In terms of biological role, part of the Sec protein translocase complex. Interacts with the SecYEG preprotein conducting channel. Has a central role in coupling the hydrolysis of ATP to the transfer of proteins into and across the cell membrane, serving as an ATP-driven molecular motor driving the stepwise translocation of polypeptide chains across the membrane. Probably participates in protein translocation into and across both the cytoplasmic and thylakoid membranes in cyanobacterial cells. This chain is Protein translocase subunit SecA, found in Prochlorococcus marinus (strain MIT 9301).